The primary structure comprises 745 residues: Serine/threonine-protein kinase GG21441 (745 aa).

The interval Arg-49–Thr-73 is disordered. Residues Lys-57–Asp-67 are compositionally biased toward basic and acidic residues. Doublecortin domains are found at residues Leu-159–Asn-245 and Arg-315–Phe-398. Residues Tyr-479–Thr-737 enclose the Protein kinase domain. ATP-binding positions include Ile-485 to Val-493 and Lys-508. Asp-600 serves as the catalytic Proton acceptor.

This sequence belongs to the protein kinase superfamily. CAMK Ser/Thr protein kinase family. CaMK subfamily.

The catalysed reaction is L-seryl-[protein] + ATP = O-phospho-L-seryl-[protein] + ADP + H(+). It carries out the reaction L-threonyl-[protein] + ATP = O-phospho-L-threonyl-[protein] + ADP + H(+). This chain is Serine/threonine-protein kinase GG21441, found in Drosophila erecta (Fruit fly).